Consider the following 134-residue polypeptide: Zinc finger protein 593 (134 aa).

Basic residues predominate over residues 1–25 (MGRSRRTGAHRAHSLARQMKAKRRR). Disordered regions lie at residues 1–57 (MGRS…DLPG) and 82–134 (SKDH…DTST). Residues 26-36 (PDLDEIHRELR) are compositionally biased toward basic and acidic residues. A C2H2-type zinc finger spans residues 61–85 (HRCLACARYFIDSTNLKTHFRSKDH).

The protein belongs to the ZNF593/BUD20 C2H2-type zinc-finger protein family. As to quaternary structure, associates with pre-60S ribosomal particles. Ubiquitous. Detected in spleen, prostate, testis, small intestine, colon and to a minor level in thymus and peripheral blood leukocytes.

It is found in the nucleus. The protein localises to the nucleolus. It localises to the cytoplasm. Involved in pre-60S ribosomal particles maturation by promoting the nuclear export of the 60S ribosome. Negatively modulates the DNA binding activity of Oct-2 and therefore its transcriptional regulatory activity. The sequence is that of Zinc finger protein 593 (ZNF593) from Homo sapiens (Human).